Consider the following 233-residue polypeptide: 28 kDa ribonucleoprotein, chloroplastic (233 aa).

The span at Cys-1–Ala-16 shows a compositional bias: polar residues. A disordered region spans residues Cys-1–Pro-52. RRM domains follow at residues Ala-55–Pro-133 and Cys-149–Glu-227.

It is found in the plastid. The protein localises to the chloroplast. Functionally, probably involved in the 3'-end processing of chloroplast mRNA's. The polypeptide is 28 kDa ribonucleoprotein, chloroplastic (Spinacia oleracea (Spinach)).